The primary structure comprises 550 residues: (+)-germacrene D synthase (550 aa).

Residues Asp304, Asp308, and Glu455 each coordinate Mg(2+). Residues 304-308 carry the DDXXD motif motif; it reads DDIYD.

This sequence belongs to the terpene synthase family. Tpsa subfamily. Mg(2+) is required as a cofactor. Requires Mn(2+) as cofactor. The cofactor is Co(2+). Ni(2+) serves as cofactor.

It localises to the cytoplasm. It carries out the reaction (2E,6E)-farnesyl diphosphate = (+)-germacrene D + diphosphate. It participates in secondary metabolite biosynthesis; terpenoid biosynthesis. In terms of biological role, involved in the biosynthesis of germacrene D. Can use farnesyl diphosphate as substrate, but not geranyl diphosphate. Produces mainly (+)-germacrene D along with germacrene B and a number of minor by-products. This Zingiber officinale (Ginger) protein is (+)-germacrene D synthase.